The primary structure comprises 680 residues: Oligopeptidase A (680 aa).

His469 contributes to the Zn(2+) binding site. Glu470 is a catalytic residue. Residues His473 and His476 each contribute to the Zn(2+) site.

This sequence belongs to the peptidase M3 family. Zn(2+) is required as a cofactor.

The catalysed reaction is Hydrolysis of oligopeptides, with broad specificity. Gly or Ala commonly occur as P1 or P1' residues, but more distant residues are also important, as is shown by the fact that Z-Gly-Pro-Gly-|-Gly-Pro-Ala is cleaved, but not Z-(Gly)(5).. In terms of biological role, may play a specific role in the degradation of signal peptides after they are released from precursor forms of secreted proteins. Can cleave N-acetyl-L-Ala(4). This chain is Oligopeptidase A (prlC), found in Salmonella typhimurium (strain LT2 / SGSC1412 / ATCC 700720).